We begin with the raw amino-acid sequence, 88 residues long: Small ribosomal subunit protein bS16 (88 aa).

The protein belongs to the bacterial ribosomal protein bS16 family.

This is Small ribosomal subunit protein bS16 from Geotalea uraniireducens (strain Rf4) (Geobacter uraniireducens).